The sequence spans 82 residues: Delta-actitoxin-Aeq2a (82 aa).

An N-terminal signal peptide occupies residues 1–19 (MNRLMILVFAAVFLALASA). The propeptide occupies 20–26 (DEDVDIA). Cystine bridges form between cysteine 32–cysteine 79, cysteine 34–cysteine 69, and cysteine 62–cysteine 80.

Belongs to the sea anemone sodium channel inhibitory toxin family. Type I subfamily.

The protein resides in the secreted. Its subcellular location is the nematocyst. Binds specifically to voltage-gated sodium channels (Nav), thereby delaying their inactivation during signal transduction. Causes death to crabs (minimum lethal dose of 25 ug/kg) and mice. The protein is Delta-actitoxin-Aeq2a of Actinia equina (Beadlet anemone).